The primary structure comprises 60 residues: UPF0434 protein YcaR (60 aa).

This sequence belongs to the UPF0434 family.

The protein is UPF0434 protein YcaR of Escherichia coli O139:H28 (strain E24377A / ETEC).